A 451-amino-acid polypeptide reads, in one-letter code: Cytochrome c biogenesis protein CcsB (451 aa).

3 helical membrane passes run 30 to 50, 89 to 109, and 175 to 195; these read LRLA…GTVI, TWWF…CTFT, and IGPI…IWGA.

The protein belongs to the Ccs1/CcsB family. May interact with CcsA.

It is found in the cellular thylakoid membrane. In terms of biological role, required during biogenesis of c-type cytochromes (cytochrome c6 and cytochrome f) at the step of heme attachment. The protein is Cytochrome c biogenesis protein CcsB of Crocosphaera subtropica (strain ATCC 51142 / BH68) (Cyanothece sp. (strain ATCC 51142)).